Consider the following 633-residue polypeptide: Phospholipid--sterol O-acyltransferase (633 aa).

Topologically, residues 1–6 (MGANSK) are cytoplasmic. A helical; Signal-anchor for type II membrane protein transmembrane segment spans residues 7–29 (SVTASFTVIAVFFLICGGRTAVE). Residues 30–633 (DETEFHGDYS…TSANMLLQYI (604 aa)) lie on the Lumenal side of the membrane. The Acyl-ester intermediate role is filled by Ser195. Catalysis depends on charge relay system residues Asp461 and His505.

It belongs to the AB hydrolase superfamily. Lipase family.

Its subcellular location is the microsome membrane. In terms of biological role, involved in lipid catabolism. Essential for sterol esters biosynthesis in leaves and seeds, but not in flowers. Plays a role in controlling the free sterol content of leaves. Catalyzes the transacylation of acyl groups from phospholipids to a variety of different sterols. Prefers phosphatidylethanolamine over phosphatidylcholine as an acyl donor. Not active toward neutral lipids. Highly specific for position sn-2, which in plant lipids is essentially devoid of saturated acyl groups. Broad sterol specificity (cholesterol &gt; campesterol &gt; sitosterol &gt; stigmasterol), but no activity with lupeol or beta-amyrin. The protein is Phospholipid--sterol O-acyltransferase (PSAT) of Arabidopsis thaliana (Mouse-ear cress).